The primary structure comprises 513 residues: Probable DNA ligase (513 aa).

Residue E213 participates in ATP binding. Catalysis depends on K215, which acts as the N6-AMP-lysine intermediate. ATP is bound by residues R220, R235, E264, F304, R376, and K382.

The protein belongs to the ATP-dependent DNA ligase family. Mg(2+) serves as cofactor.

It carries out the reaction ATP + (deoxyribonucleotide)n-3'-hydroxyl + 5'-phospho-(deoxyribonucleotide)m = (deoxyribonucleotide)n+m + AMP + diphosphate.. Functionally, DNA ligase that seals nicks in double-stranded DNA during DNA replication, DNA recombination and DNA repair. This is Probable DNA ligase from Anaeromyxobacter sp. (strain K).